Reading from the N-terminus, the 258-residue chain is Tryptophan synthase alpha chain (258 aa).

Catalysis depends on proton acceptor residues Glu-47 and Asp-58.

This sequence belongs to the TrpA family. In terms of assembly, tetramer of two alpha and two beta chains.

The catalysed reaction is (1S,2R)-1-C-(indol-3-yl)glycerol 3-phosphate + L-serine = D-glyceraldehyde 3-phosphate + L-tryptophan + H2O. Its pathway is amino-acid biosynthesis; L-tryptophan biosynthesis; L-tryptophan from chorismate: step 5/5. In terms of biological role, the alpha subunit is responsible for the aldol cleavage of indoleglycerol phosphate to indole and glyceraldehyde 3-phosphate. This Bacillus thuringiensis (strain Al Hakam) protein is Tryptophan synthase alpha chain.